A 611-amino-acid chain; its full sequence is Vitamin B12 transporter BtuB (611 aa).

The first 22 residues, 1-22 (MQKSALAIALASLLTPISYLHA), serve as a signal peptide directing secretion. Residues 29–36 (ETVVVTAN) carry the TonB box motif. Positions 41–154 (KASSTLADVE…IGGVINIITK (114 aa)) constitute a TBDR plug domain. In terms of domain architecture, TBDR beta-barrel spans 159 to 611 (QQGTTVSAGL…AYYLNIGYQF (453 aa)). A TonB C-terminal box motif is present at residues 594 to 611 (NGYPAAERAYYLNIGYQF).

The protein belongs to the TonB-dependent receptor family. BtuB (TC 1.B.14.3.1) subfamily.

It is found in the cell outer membrane. Functionally, involved in the active translocation of vitamin B12 (cyanocobalamin) across the outer membrane to the periplasmic space. It derives its energy for transport by interacting with the trans-periplasmic membrane protein TonB. The polypeptide is Vitamin B12 transporter BtuB (Vibrio cholerae serotype O1 (strain ATCC 39541 / Classical Ogawa 395 / O395)).